The primary structure comprises 936 residues: MEEQFTNQKKVSHLQSLMNTKRSEQPTEFAKKHRFKDTLALFLVFLSFNHFTSLCLLVSFIVATKCKDFLANCFIILFLSKKPSRHIGEVAHIDISTSKVTNGSSNRKSNSRFFGNSKNSFVIPIPVLICEILFAMLLKIYGGDYFVKPIKNLAISIIASFLINDPSDCLSYATSCSVLYAVSTNTFQRVSHFFDIIQLFDMSLRGTGQSIKLFTVFRKYSQFFKKLFSLFLPMPFKMLGKHSDSMIYYLSFHILFFSFASSLLHPHRQTAENKPLKKGFNSTKPDVARVQGLQKMRISSSSSVSADSNTLEDQSPMIPNDPGGLSSSNQTIHPSQQNNSPVPLSSHSNILNPAASYPTDATSSFPYFTSMVKEYKSYQPSVISAEGSNSQAVTTTTSTTTSPTTFNFSGDNTSLSNEISLSDSSNGNSKKDSDFFSPSNDKYTNQLFELNVDFGNMFSSSKLSSDISVTSNLENFIRLLFRRKNQHLIAPLWSMVVTLKTTNFEKKYLQETSENSLTPTNSNTSYVSNQEKHDKDLDTINTHSVSSRISFTHAGKFKKSVFNNFEPSNTMALIAKTTSDDYNLLNLVSTNENIFNRNDNDYKVCIIDISTNSITFHIENLHDGELIVLVNGVIWSEVSCALILEHVGEEYVVVNGLVPSCSYDIQFINRLNHRDDYLVSDLIVRTCGNNNAIAGKFENLDFSFPSYYHRKFLSPLLTLKHSVLTTNANLSDERTKLKKTKKEFSKKLSLLRQEIDYFKGRISQNATHDEKSTLKVENLKVALQQSETAVNKLEMQLKTLTEKELELEEEYLKKKDLHLKNQLEFSKLEESLSKDLKNSEGRFQKVNQELVQLGSKLDKLNARNEKLQKEVDQNAEEIEKFSTQFLSKREKDRFRRKEYRIREANKFELTIKGLEQDINRLENENENIHSLIGNSY.

Over 1–41 the chain is Lumenal; that stretch reads MEEQFTNQKKVSHLQSLMNTKRSEQPTEFAKKHRFKDTLAL. Residue Lys10 forms a Glycyl lysine isopeptide (Lys-Gly) (interchain with G-Cter in ubiquitin) linkage. The chain crosses the membrane as a helical span at residues 42-62; that stretch reads FLVFLSFNHFTSLCLLVSFIV. Over 63 to 120 the chain is Cytoplasmic; that stretch reads ATKCKDFLANCFIILFLSKKPSRHIGEVAHIDISTSKVTNGSSNRKSNSRFFGNSKNS. A helical transmembrane segment spans residues 121 to 141; that stretch reads FVIPIPVLICEILFAMLLKIY. Residues 142–245 lie on the Lumenal side of the membrane; that stretch reads GGDYFVKPIK…FKMLGKHSDS (104 aa). A helical membrane pass occupies residues 246 to 266; sequence MIYYLSFHILFFSFASSLLHP. The Cytoplasmic portion of the chain corresponds to 267 to 936; that stretch reads HRQTAENKPL…NIHSLIGNSY (670 aa). 3 disordered regions span residues 297 to 351, 387 to 437, and 512 to 533; these read RISS…SNIL, GSNS…DFFS, and TSENSLTPTNSNTSYVSNQEKH. Residues 299 to 308 show a composition bias toward low complexity; the sequence is SSSSSVSADS. Over residues 325 to 351 the composition is skewed to polar residues; that stretch reads LSSSNQTIHPSQQNNSPVPLSSHSNIL. 2 stretches are compositionally biased toward low complexity: residues 394–405 and 414–428; these read TTTTSTTTSPTT and SLSNEISLSDSSNGN. Positions 512-529 are enriched in polar residues; sequence TSENSLTPTNSNTSYVSN.

The protein resides in the endoplasmic reticulum membrane. This chain is Protein NNF2 (NNF2), found in Saccharomyces cerevisiae (strain ATCC 204508 / S288c) (Baker's yeast).